The following is a 529-amino-acid chain: MYQKEIEQRRTFGIISHPDAGKTTLTEKLLLFGGAIQLAGTVKARKATRHATSDWMAIEKERGISVTTSVMKFHYRDFEINLLDTPGHQDFSEDTYRVLTAVDSAVMVIDGAKGVEPQTEKLMEICLLRNTPVITFINKLDREVLSPLELLADIEKKLQIECVPMSWPIGMGKSFRGVYNLYRRELQLFTPGASTRGGEVFVIRDLDDPELDRRLGSQADELREDIALMEGAANPFVYEHFLKANQTPVFFGSAINNFGVRELLDAVVELAPSPRPRLATTREVLPSEEQFSGFAFKIQANMDSAHRDRIAFVRICSGKFTRGMKVRHNRIGKDVTLANATIFMAQDRASVEEAYPGDIIGIHNHGTIRIGDTFTEGEELRFTGIPNFAPEHFCRVRLKNPLKTKQLQKGLNQLSEEGIVQVFRPLTSNDYILGVVGVLQFDVTMVRLLNEYGVEADYESVDYAAARWVTCPEREKLENFEKQHRSNLALDSEGNLIYLALSQWRLSNTMEEWPDITMHKTMEHSQRLN.

The 269-residue stretch at 7-275 (EQRRTFGIIS…AVVELAPSPR (269 aa)) folds into the tr-type G domain. GTP contacts are provided by residues 16 to 23 (SHPDAGKT), 84 to 88 (DTPGH), and 138 to 141 (NKLD).

This sequence belongs to the TRAFAC class translation factor GTPase superfamily. Classic translation factor GTPase family. PrfC subfamily.

It localises to the cytoplasm. Increases the formation of ribosomal termination complexes and stimulates activities of RF-1 and RF-2. It binds guanine nucleotides and has strong preference for UGA stop codons. It may interact directly with the ribosome. The stimulation of RF-1 and RF-2 is significantly reduced by GTP and GDP, but not by GMP. The protein is Peptide chain release factor 3 of Syntrophus aciditrophicus (strain SB).